Reading from the N-terminus, the 1616-residue chain is DNA (cytosine-5)-methyltransferase 1 (1616 aa).

The tract at residues 1-120 (MPARTAPARV…NQARSEARRV (120 aa)) is interaction with DMAP1. Positions 1-148 (MPARTAPARV…RRSKSDGEAK (148 aa)) are interaction with DNMT3A. Interaction with the PRC2/EED-EZH2 complex stretches follow at residues 1–336 (MPAR…TEKK) and 308–606 (NPQI…TIRH). The 94-residue stretch at 16-109 (PAISLPDDVR…NREVNGRLEN (94 aa)) folds into the DMAP1-binding domain. Residue K70 is modified to N6,N6-dimethyllysine. A disordered region spans residues 103–349 (VNGRLENGNQ…AKTVMNSKTH (247 aa)). Phosphoserine occurs at positions 127 and 133. T137 carries the phosphothreonine modification. S141 carries the post-translational modification Phosphoserine. Position 142 is an N6-methyllysine; by SETD7 (K142). Position 143 is a phosphoserine; by PKB/AKT1 (S143). The segment at 149–217 (PEPSPSPRIT…TSRERVARPL (69 aa)) is interaction with DNMT3B. Phosphoserine is present on residues S152 and S154. Position 160 is an N6-acetyllysine (K160). An interaction with PCNA region spans residues 163 to 174 (RQTTITSHFAKG). Position 166 is a phosphothreonine (T166). N6-acetyllysine occurs at positions 173 and 188. A Nuclear localization signal motif is present at residues 177–205 (KRKPQEESERAKSDESIKEEDKDQDEKRR). 3 stretches are compositionally biased toward basic and acidic residues: residues 179–214 (KPQEESERAKSDESIKEEDKDQDEKRRRVTSRERVA), 221–267 (EPER…REAR), and 281–306 (KDEKKHRSQPKDLAAKRRPEEKEPEK). K259 carries the post-translational modification N6-acetyllysine; alternate. Residue K259 forms a Glycyl lysine isopeptide (Lys-Gly) (interchain with G-Cter in SUMO2); alternate linkage. Residues 310 to 502 (QISDEKDEDE…PEYAPIFGLM (193 aa)) are homodimerization. S312 is modified (phosphoserine). Over residues 321–337 (EEKRRKTTPKEPTEKKM) the composition is skewed to basic and acidic residues. The segment at 331-550 (EPTEKKMARA…NLNRFTEDSL (220 aa)) is DNA replication foci-targeting sequence. Positions 353 and 356 each coordinate Zn(2+). At K366 the chain carries N6-acetyllysine. Residues S394 and S398 each carry the phosphoserine modification. Zn(2+)-binding residues include C414 and H418. A phosphoserine mark is found at S509 and S549. The segment at 646-692 (NAFKRRRCGVCEVCQQPECGKCKACKDMVKFGGSGRSKQACQERRCP) adopts a CXXC-type zinc-finger fold. The interval 651–697 (RRCGVCEVCQQPECGKCKACKDMVKFGGSGRSKQACQERRCPNMAMK) is required for activity. 8 residues coordinate Zn(2+): C653, C656, C659, C664, C667, C670, C686, and C691. Residues 693-754 (NMAMKEADDD…SYYKKVCIDA (62 aa)) are autoinhibitory linker. Residues 699-709 (ADDDEEVDDNI) show a composition bias toward acidic residues. Residues 699–729 (ADDDEEVDDNIPEMPSPKKMHQGKKKKQNKN) form a disordered region. S714 is subject to Phosphoserine. Basic residues predominate over residues 716–728 (KKMHQGKKKKQNK). S732 is modified (phosphoserine). The residue at position 749 (K749) is an N6-acetyllysine. Residues 755–880 (ETLEVGDCVS…QDYARFESPP (126 aa)) enclose the BAH 1 domain. At S878 the chain carries Phosphoserine. N6-acetyllysine is present on residues K891, K957, K961, K975, and K1054. The region spanning 972 to 1100 (HYRKYSDYIK…AKSKSFEDPP (129 aa)) is the BAH 2 domain. The tract at residues 1095 to 1130 (SFEDPPNHARSPGNKGKGKGKGKGKPKSQACEPSEP) is disordered. 5 tandem repeats follow at residues 1109 to 1110 (KG), 1111 to 1112 (KG), 1113 to 1114 (KG), 1115 to 1116 (KG), and 1117 to 1118 (KG). The interval 1109–1120 (KGKGKGKGKGKP) is 6 X 2 AA tandem repeats of K-G. Over residues 1110–1120 (GKGKGKGKGKP) the composition is skewed to basic residues. N6-acetyllysine is present on residues K1111, K1113, and K1115. K1117 carries the N6-acetyllysine; by EHMT2 modification. K1119 and K1121 each carry N6-acetyllysine. The stretch at 1119–1120 (KP) is one 6; approximate repeat. Residues 1121–1616 (KSQACEPSEP…KIKEEEAAKD (496 aa)) are interaction with the PRC2/EED-EZH2 complex. One can recognise an SAM-dependent MTase C5-type domain in the interval 1139 to 1599 (LRTLDVFSGC…LEIKLCMLAK (461 aa)). Residues 1139–1616 (LRTLDVFSGC…KIKEEEAAKD (478 aa)) are catalytic. S-adenosyl-L-methionine contacts are provided by residues S1146, 1150–1151 (GL), 1168–1169 (EM), 1190–1191 (DC), and C1191. C1226 is a catalytic residue. An N6-acetyllysine mark is found at K1349 and K1415. Residues N1578 and V1580 each contribute to the S-adenosyl-L-methionine site. K1609 is covalently cross-linked (Glycyl lysine isopeptide (Lys-Gly) (interchain with G-Cter in SUMO2)).

It belongs to the class I-like SAM-binding methyltransferase superfamily. C5-methyltransferase family. Homodimer. Forms a stable complex with E2F1, BB1 and HDAC1. Forms a complex with DMAP1 and HDAC2, with direct interaction. Interacts with the PRC2/EED-EZH2 complex. Probably part of a corepressor complex containing ZNF304, TRIM28, SETDB1 and DNMT1. Interacts with UHRF1; promoting its recruitment to hemimethylated DNA. Interacts with USP7, promoting its deubiquitination. Interacts with PCNA. Interacts with MBD2 and MBD3. Interacts with DNMT3A and DNMT3B. Interacts with UBC9. Interacts with CSNK1D. Interacts with HDAC1. Interacts with BAZ2A/TIP5. Interacts with SIRT7. Interacts with ZNF263; recruited to the SIX3 promoter along with other proteins involved in chromatin modification and transcriptional corepression where it contributes to transcriptional repression. Interacts with L3MBTL3 and DCAF5; the interaction requires DNMT1 methylation at Lys-142 and is necessary to target DNMT1 for ubiquitination by the CRL4-DCAF5 E3 ubiquitin ligase complex and proteasomal degradation. Interacts with PHF20L1; the interaction requires DNMT1 methylation at Lys-142 and protects DNMT1 from ubiquitination and proteasomal degradation. Sumoylated; sumoylation increases activity. In terms of processing, acetylation on multiple lysines, mainly by KAT2B/PCAF, regulates cell cycle G(2)/M transition. Deacetylation of Lys-1349 and Lys-1415 by SIRT1 increases methyltransferase activity. Post-translationally, phosphorylation of Ser-154 by CDKs is important for enzymatic activity and protein stability. Phosphorylation of Ser-143 by AKT1 prevents methylation by SETD7 thereby increasing DNMT1 stability. Methylation at Lys-142 by SETD7 is necessary for the regulation of DNMT1 proteasomal degradation. In terms of processing, ubiquitinated by UHRF1; interaction with USP7 counteracts ubiquitination by UHRF1 by promoting deubiquitination and preventing degradation by the proteasome. As to expression, ubiquitous; highly expressed in fetal tissues, heart, kidney, placenta, peripheral blood mononuclear cells, and expressed at lower levels in spleen, lung, brain, small intestine, colon, liver, and skeletal muscle. Isoform 2 is less expressed than isoform 1.

It is found in the nucleus. It catalyses the reaction a 2'-deoxycytidine in DNA + S-adenosyl-L-methionine = a 5-methyl-2'-deoxycytidine in DNA + S-adenosyl-L-homocysteine + H(+). Methylates CpG residues. Preferentially methylates hemimethylated DNA. Associates with DNA replication sites in S phase maintaining the methylation pattern in the newly synthesized strand, that is essential for epigenetic inheritance. Associates with chromatin during G2 and M phases to maintain DNA methylation independently of replication. It is responsible for maintaining methylation patterns established in development. DNA methylation is coordinated with methylation of histones. Mediates transcriptional repression by direct binding to HDAC2. In association with DNMT3B and via the recruitment of CTCFL/BORIS, involved in activation of BAG1 gene expression by modulating dimethylation of promoter histone H3 at H3K4 and H3K9. Probably forms a corepressor complex required for activated KRAS-mediated promoter hypermethylation and transcriptional silencing of tumor suppressor genes (TSGs) or other tumor-related genes in colorectal cancer (CRC) cells. Also required to maintain a transcriptionally repressive state of genes in undifferentiated embryonic stem cells (ESCs). Associates at promoter regions of tumor suppressor genes (TSGs) leading to their gene silencing. Promotes tumor growth. This Homo sapiens (Human) protein is DNA (cytosine-5)-methyltransferase 1 (DNMT1).